Here is a 325-residue protein sequence, read N- to C-terminus: Tagatose 1,6-diphosphate aldolase (325 aa).

Belongs to the aldolase LacD family.

It carries out the reaction D-tagatofuranose 1,6-bisphosphate = D-glyceraldehyde 3-phosphate + dihydroxyacetone phosphate. Its pathway is carbohydrate metabolism; D-tagatose 6-phosphate degradation; D-glyceraldehyde 3-phosphate and glycerone phosphate from D-tagatose 6-phosphate: step 2/2. This chain is Tagatose 1,6-diphosphate aldolase, found in Staphylococcus epidermidis (strain ATCC 35984 / DSM 28319 / BCRC 17069 / CCUG 31568 / BM 3577 / RP62A).